The sequence spans 339 residues: Heat-inducible transcription repressor HrcA (339 aa).

This sequence belongs to the HrcA family.

Negative regulator of class I heat shock genes (grpE-dnaK-dnaJ and groELS operons). Prevents heat-shock induction of these operons. The polypeptide is Heat-inducible transcription repressor HrcA (Parafrankia sp. (strain EAN1pec)).